Reading from the N-terminus, the 244-residue chain is Krueppel-like factor 9 (244 aa).

The interval 80 to 142 (SVCSDSLESP…AKGKHASEKR (63 aa)) is disordered. Ser122 bears the Phosphoserine mark. C2H2-type zinc fingers lie at residues 143–167 (HKCP…YRVH), 173–197 (FPCT…YRTH), and 203–225 (FRCP…ARRH).

The protein belongs to the Sp1 C2H2-type zinc-finger protein family. Interacts with ZZEF1. As to expression, epidermis (at protein level).

It localises to the nucleus. Functionally, transcription factor that binds to GC box promoter elements. Selectively activates mRNA synthesis from genes containing tandem repeats of GC boxes but represses genes with a single GC box. Acts as an epidermal circadian transcription factor regulating keratinocyte proliferation. This Homo sapiens (Human) protein is Krueppel-like factor 9 (KLF9).